A 116-amino-acid chain; its full sequence is Small ribosomal subunit protein bS18c (116 aa).

A compositionally biased stretch (polar residues) spans 1-13 (MKPSFRNTSPSFR). The disordered stretch occupies residues 1-51 (MKPSFRNTSPSFRNRSKPYFRNRSKPYFRNRSKPSFRNTSKRFSPNQQSFR). Over residues 14–34 (NRSKPYFRNRSKPYFRNRSKP) the composition is skewed to basic residues. Residues 35-49 (SFRNTSKRFSPNQQS) show a composition bias toward polar residues.

The protein belongs to the bacterial ribosomal protein bS18 family. In terms of assembly, part of the 30S ribosomal subunit.

It is found in the plastid. The protein localises to the chloroplast. The protein is Small ribosomal subunit protein bS18c of Cryptomeria japonica (Japanese cedar).